Reading from the N-terminus, the 227-residue chain is Triosephosphate isomerase (227 aa).

9–11 (NFK) contacts substrate. The active-site Electrophile is the histidine 93. The active-site Proton acceptor is the glutamate 141. Residues isoleucine 146, glycine 180, and 201–202 (AS) each bind substrate.

This sequence belongs to the triosephosphate isomerase family. In terms of assembly, homotetramer; dimer of dimers.

Its subcellular location is the cytoplasm. It carries out the reaction D-glyceraldehyde 3-phosphate = dihydroxyacetone phosphate. The protein operates within carbohydrate biosynthesis; gluconeogenesis. Its pathway is carbohydrate degradation; glycolysis; D-glyceraldehyde 3-phosphate from glycerone phosphate: step 1/1. Involved in the gluconeogenesis. Catalyzes stereospecifically the conversion of dihydroxyacetone phosphate (DHAP) to D-glyceraldehyde-3-phosphate (G3P). The polypeptide is Triosephosphate isomerase (Saccharolobus solfataricus (strain ATCC 35092 / DSM 1617 / JCM 11322 / P2) (Sulfolobus solfataricus)).